A 346-amino-acid polypeptide reads, in one-letter code: Uroporphyrinogen decarboxylase (346 aa).

Residues 26-30 (RQAGR), Phe45, Asp76, Tyr153, Ser208, and His323 contribute to the substrate site.

Belongs to the uroporphyrinogen decarboxylase family. In terms of assembly, homodimer.

The protein localises to the cytoplasm. The enzyme catalyses uroporphyrinogen III + 4 H(+) = coproporphyrinogen III + 4 CO2. The protein operates within porphyrin-containing compound metabolism; protoporphyrin-IX biosynthesis; coproporphyrinogen-III from 5-aminolevulinate: step 4/4. In terms of biological role, catalyzes the decarboxylation of four acetate groups of uroporphyrinogen-III to yield coproporphyrinogen-III. In Prochlorococcus marinus subsp. pastoris (strain CCMP1986 / NIES-2087 / MED4), this protein is Uroporphyrinogen decarboxylase.